The primary structure comprises 504 residues: Anaerobic nitric oxide reductase transcription regulator NorR (504 aa).

At Asp-57 the chain carries 4-aspartylphosphate. Residues 187 to 416 (MIGLSPGMTQ…LEHAIHRAVV (230 aa)) form the Sigma-54 factor interaction domain. Residues 215–222 (GETGTGKE) and 278–287 (ADNGTLFLDE) each bind ATP. The segment at residues 479–498 (WAACARMLETDVANLHRLAK) is a DNA-binding region (H-T-H motif).

It participates in nitrogen metabolism; nitric oxide reduction. Functionally, required for the expression of anaerobic nitric oxide (NO) reductase, acts as a transcriptional activator for at least the norVW operon. Activation also requires sigma-54. This Escherichia coli O127:H6 (strain E2348/69 / EPEC) protein is Anaerobic nitric oxide reductase transcription regulator NorR.